Consider the following 292-residue polypeptide: 4-hydroxy-tetrahydrodipicolinate synthase (292 aa).

T45 serves as a coordination point for pyruvate. The Proton donor/acceptor role is filled by Y133. K161 serves as the catalytic Schiff-base intermediate with substrate. I203 serves as a coordination point for pyruvate.

It belongs to the DapA family. As to quaternary structure, homotetramer; dimer of dimers.

It is found in the cytoplasm. It carries out the reaction L-aspartate 4-semialdehyde + pyruvate = (2S,4S)-4-hydroxy-2,3,4,5-tetrahydrodipicolinate + H2O + H(+). It functions in the pathway amino-acid biosynthesis; L-lysine biosynthesis via DAP pathway; (S)-tetrahydrodipicolinate from L-aspartate: step 3/4. Functionally, catalyzes the condensation of (S)-aspartate-beta-semialdehyde [(S)-ASA] and pyruvate to 4-hydroxy-tetrahydrodipicolinate (HTPA). The polypeptide is 4-hydroxy-tetrahydrodipicolinate synthase (Escherichia fergusonii (strain ATCC 35469 / DSM 13698 / CCUG 18766 / IAM 14443 / JCM 21226 / LMG 7866 / NBRC 102419 / NCTC 12128 / CDC 0568-73)).